A 264-amino-acid chain; its full sequence is MIVKTRAVVLREIKYRDQSKILTLYTREFGRLACILKGGRNPKNRLSGIFSAGNVLDIVLYRKPEREVQLISDGSLVSCPMVPGPDIERFGVLYRIIDLVRLTTEHDGRSPRLFSLLESTLLELNRERVAYRTLYAWFLLRFISLQGFAPELCRCVFSGREIAADAAGGPRGELLFVMNPGGLALPGTACTDGRNVRPILPEAADLLAALSRTSTAESAAGGSGIPEGSAALFCGTLLQEYCRHHLEHTGGQKNLAVISQLLAE.

It belongs to the RecO family.

Functionally, involved in DNA repair and RecF pathway recombination. This chain is DNA repair protein RecO, found in Chlorobium luteolum (strain DSM 273 / BCRC 81028 / 2530) (Pelodictyon luteolum).